Consider the following 281-residue polypeptide: MNLPAHTALFTPSWHAELELGYGRFYDCTRPTQRRHKGPLRVQKHLYAEGPEVCQHIIVHPPGGIAGGDRLDISVNVGAHAWAQLTSPGAAKWYRAASPAFQQLELHVQPGATLEWLPQETIVFSNAQAELTTRIELHGDARLCYWDVVALGRPASGERFEHGHFQSHLDIRRDGTLLWHERQRIIGADGLLDSPIGLDGKTVFATLLLTGDVDSDLLEVCRSLSMPSPVRGNLTQLPGLIVARCLADEALHARAWLIEIWKRLRPALLGREAVMPRIWNT.

This sequence belongs to the UreD family. As to quaternary structure, ureD, UreF and UreG form a complex that acts as a GTP-hydrolysis-dependent molecular chaperone, activating the urease apoprotein by helping to assemble the nickel containing metallocenter of UreC. The UreE protein probably delivers the nickel.

It localises to the cytoplasm. Required for maturation of urease via the functional incorporation of the urease nickel metallocenter. This Pseudomonas syringae pv. tomato (strain ATCC BAA-871 / DC3000) protein is Urease accessory protein UreD 2.